The sequence spans 661 residues: UvrABC system protein B (661 aa).

Positions 25-182 (AGLSSKKRSQ…NDLINLQYER (158 aa)) constitute a Helicase ATP-binding domain. 38–45 (GITGSGKT) provides a ligand contact to ATP. The Beta-hairpin motif lies at 91 to 114 (YYDYYQPEAYIARTDTFIEKDSSI). The Helicase C-terminal domain occupies 430–592 (QVEDLISEIQ…IIPKTINRAI (163 aa)). Residues 621–656 (KTHIDKLKKEMLKAASNLEFEQAVKLRDQLKTLEAA) enclose the UVR domain.

This sequence belongs to the UvrB family. In terms of assembly, forms a heterotetramer with UvrA during the search for lesions. Interacts with UvrC in an incision complex.

It localises to the cytoplasm. The UvrABC repair system catalyzes the recognition and processing of DNA lesions. A damage recognition complex composed of 2 UvrA and 2 UvrB subunits scans DNA for abnormalities. Upon binding of the UvrA(2)B(2) complex to a putative damaged site, the DNA wraps around one UvrB monomer. DNA wrap is dependent on ATP binding by UvrB and probably causes local melting of the DNA helix, facilitating insertion of UvrB beta-hairpin between the DNA strands. Then UvrB probes one DNA strand for the presence of a lesion. If a lesion is found the UvrA subunits dissociate and the UvrB-DNA preincision complex is formed. This complex is subsequently bound by UvrC and the second UvrB is released. If no lesion is found, the DNA wraps around the other UvrB subunit that will check the other stand for damage. This Rickettsia peacockii (strain Rustic) protein is UvrABC system protein B.